A 1366-amino-acid polypeptide reads, in one-letter code: Protein HUA2-LIKE 2 (1366 aa).

Positions 24 to 81 (VGDLVLAKVKGFPAWPAVVSEPEKWDASPDSKKVFVHFFGTQQIAFCNPGDVEAFTEE) constitute a PWWP domain. A compositionally biased stretch (basic and acidic residues) spans 111–124 (LKQQERASDPKSAE). 5 disordered regions span residues 111 to 138 (LKQQ…TLMP), 203 to 319 (TYSS…SGSK), 384 to 403 (NVQT…CEEN), 427 to 451 (EANS…AQTS), and 787 to 808 (SESA…TGEK). Residues 213-252 (VRSQNCAPQNETCPVQRSKSPSRLQTEKLQSSMLQNSDGG) show a composition bias toward polar residues. Over residues 391 to 403 (SHEKFTERPCEEN) the composition is skewed to basic and acidic residues. Over residues 787-803 (SESANDMQNNSSGSPNI) the composition is skewed to polar residues. Positions 836–977 (DVQSTRESYE…HHIRELDSHS (142 aa)) constitute a CID domain. Disordered stretches follow at residues 1027-1076 (LKDE…TAER) and 1128-1366 (TSHQ…QRSD). Positions 1032-1052 (GGSDSEGGCDSEGGSDSDGGD) are enriched in acidic residues. Positions 1057–1066 (TPEHESRILE) are enriched in basic and acidic residues. The segment covering 1138–1152 (PPLPSSSPPPPPAPP) has biased composition (pro residues). Over residues 1191 to 1223 (LSGSTMHYQGPESSYISGVQLTNSIPQADGSNF) the composition is skewed to polar residues. A compositionally biased stretch (pro residues) spans 1229 to 1244 (PSHPHPHPPPPPPPPQ). Composition is skewed to basic and acidic residues over residues 1251–1262 (EPGHVLKSHRDA) and 1275–1298 (CDER…RDNW). Residues 1299 to 1309 (RYPPSSSYGSR) are compositionally biased toward low complexity.

In terms of tissue distribution, expressed throughout young primordia, and vegetative and reproductive apices.

The protein resides in the nucleus. In terms of biological role, probable transcription factor that acts with partial redundancy with HULK1 and HULK3. Plays diverse and essential roles in the control of plant development, physiology and flowering time. This is Protein HUA2-LIKE 2 from Arabidopsis thaliana (Mouse-ear cress).